The sequence spans 291 residues: ATP synthase gamma chain (291 aa).

This sequence belongs to the ATPase gamma chain family. As to quaternary structure, F-type ATPases have 2 components, CF(1) - the catalytic core - and CF(0) - the membrane proton channel. CF(1) has five subunits: alpha(3), beta(3), gamma(1), delta(1), epsilon(1). CF(0) has three main subunits: a, b and c.

It is found in the cell inner membrane. In terms of biological role, produces ATP from ADP in the presence of a proton gradient across the membrane. The gamma chain is believed to be important in regulating ATPase activity and the flow of protons through the CF(0) complex. In Burkholderia mallei (strain NCTC 10247), this protein is ATP synthase gamma chain.